A 323-amino-acid chain; its full sequence is Beta-ketoacyl-[acyl-carrier-protein] synthase III (323 aa).

Active-site residues include cysteine 114 and histidine 250. An ACP-binding region spans residues 251–255 (QANIR). Asparagine 280 is an active-site residue.

Belongs to the thiolase-like superfamily. FabH family. Homodimer.

Its subcellular location is the cytoplasm. The catalysed reaction is malonyl-[ACP] + acetyl-CoA + H(+) = 3-oxobutanoyl-[ACP] + CO2 + CoA. The protein operates within lipid metabolism; fatty acid biosynthesis. Its function is as follows. Catalyzes the condensation reaction of fatty acid synthesis by the addition to an acyl acceptor of two carbons from malonyl-ACP. Catalyzes the first condensation reaction which initiates fatty acid synthesis and may therefore play a role in governing the total rate of fatty acid production. Possesses both acetoacetyl-ACP synthase and acetyl transacylase activities. Its substrate specificity determines the biosynthesis of branched-chain and/or straight-chain of fatty acids. In Ruegeria sp. (strain TM1040) (Silicibacter sp.), this protein is Beta-ketoacyl-[acyl-carrier-protein] synthase III.